The following is a 120-amino-acid chain: Glycine cleavage system H protein (120 aa).

The region spanning 17–99 (VATVGITAHA…QGAGWLYRLK (83 aa)) is the Lipoyl-binding domain. Lys-58 is subject to N6-lipoyllysine.

This sequence belongs to the GcvH family. As to quaternary structure, the glycine cleavage system is composed of four proteins: P, T, L and H. Requires (R)-lipoate as cofactor.

The glycine cleavage system catalyzes the degradation of glycine. The H protein shuttles the methylamine group of glycine from the P protein to the T protein. This is Glycine cleavage system H protein from Methylorubrum populi (strain ATCC BAA-705 / NCIMB 13946 / BJ001) (Methylobacterium populi).